The chain runs to 83 residues: Cytotoxin homolog 5V (83 aa).

A signal peptide spans 1 to 21 (MKTLLLTLVVVTIVCLDLGYT). 4 disulfide bridges follow: Cys-24-Cys-43, Cys-36-Cys-61, Cys-65-Cys-76, and Cys-77-Cys-82.

It belongs to the three-finger toxin family. Short-chain subfamily. Orphan group XV sub-subfamily. As to expression, expressed by the venom gland.

It localises to the secreted. It is found in the target cell membrane. Functionally, has low cytotoxic activity. This Naja atra (Chinese cobra) protein is Cytotoxin homolog 5V.